Here is a 145-residue protein sequence, read N- to C-terminus: Large-conductance mechanosensitive channel (145 aa).

2 consecutive transmembrane segments (helical) span residues 14–34 (VIDL…VNSL) and 83–103 (GAFL…FLLV).

This sequence belongs to the MscL family. As to quaternary structure, homopentamer.

It localises to the cell inner membrane. In terms of biological role, channel that opens in response to stretch forces in the membrane lipid bilayer. May participate in the regulation of osmotic pressure changes within the cell. This chain is Large-conductance mechanosensitive channel, found in Paracoccus denitrificans (strain Pd 1222).